Here is a 172-residue protein sequence, read N- to C-terminus: Adenylate kinase isoenzyme 6 (172 aa).

ATP-binding residues include Gly-13, Gly-15, Lys-16, Thr-17, and Thr-18. The segment at 33 to 56 (NVGDLAREEQLYDGYDEEYDCPIL) is NMP. The NMPbind stretch occupies residues 33–56 (NVGDLAREEQLYDGYDEEYDCPIL). An LID region spans residues 108 to 118 (TRGYNEKKLTD). ATP is bound by residues Arg-109 and Lys-148.

The protein belongs to the adenylate kinase family. AK6 subfamily. As to quaternary structure, monomer and homodimer. Interacts with small ribosomal subunit protein uS11. Not a structural component of 43S pre-ribosomes, but transiently interacts with them by binding to uS11. Interacts with COIL (via C-terminus). In terms of tissue distribution, expressed in heart, brain, placenta, lung, liver, skeletal muscle, kidney, pancreas, chorionic villi and the central nervous system.

It localises to the cytoplasm. The protein localises to the nucleus. It is found in the nucleoplasm. The protein resides in the cajal body. It carries out the reaction AMP + ATP = 2 ADP. The enzyme catalyses ATP + H2O = ADP + phosphate + H(+). Functionally, broad-specificity nucleoside monophosphate (NMP) kinase that catalyzes the reversible transfer of the terminal phosphate group between nucleoside triphosphates and monophosphates. Also has ATPase activity. Involved in the late cytoplasmic maturation steps of the 40S ribosomal particles, specifically 18S rRNA maturation. While NMP activity is not required for ribosome maturation, ATPase activity is. Associates transiently with small ribosomal subunit protein uS11. ATP hydrolysis breaks the interaction with uS11. May temporarily remove uS11 from the ribosome to enable a conformational change of the ribosomal RNA that is needed for the final maturation step of the small ribosomal subunit. Its NMP activity may have a role in nuclear energy homeostasis. AMP and dAMP are the preferred substrates, but CMP and dCMP are also good substrates. IMP is phosphorylated to a much lesser extent. All nucleoside triphosphates ATP, GTP, UTP, CTP, dATP, dCTP, dGTP, and TTP are accepted as phosphate donors. CTP is the best phosphate donor, followed by UTP, ATP, GTP and dCTP. May be involved in regulation of Cajal body (CB) formation. This chain is Adenylate kinase isoenzyme 6, found in Homo sapiens (Human).